Here is a 127-residue protein sequence, read N- to C-terminus: MRRNGKERKDRTSGGSQRPYQEIVGRTWIFRGSHRGRVTKRNIIWHELIGLKVRVVNSMHPGFVGIEGYVVDETRNMLVIVGDKVWKVPKDVCIFEFETEDGAKIKIPGERLVGRPEMRLKKRWRKW.

It belongs to the eukaryotic/archaeal RNase P protein component 1 family. As to quaternary structure, consists of a catalytic RNA component and at least 4-5 protein subunits.

The protein resides in the cytoplasm. The enzyme catalyses Endonucleolytic cleavage of RNA, removing 5'-extranucleotides from tRNA precursor.. Part of ribonuclease P, a protein complex that generates mature tRNA molecules by cleaving their 5'-ends. The sequence is that of Ribonuclease P protein component 1 from Pyrococcus abyssi (strain GE5 / Orsay).